The following is a 365-amino-acid chain: Galactoside alpha-(1,2)-fucosyltransferase 1 (365 aa).

At 1-8 (MWPLSHRH) the chain is on the cytoplasmic side. Residues 9–25 (LCLAFLLVCVLSAISFF) form a helical; Signal-anchor for type II membrane protein membrane-spanning segment. At 26–365 (LHLYQDSIRH…LSPLWTLAEP (340 aa)) the chain is on the lumenal side. N-linked (GlcNAc...) asparagine glycans are attached at residues asparagine 65, asparagine 301, and asparagine 327.

Belongs to the glycosyltransferase 11 family.

It is found in the golgi apparatus. The protein resides in the golgi stack membrane. The enzyme catalyses a beta-D-galactosyl-(1-&gt;4)-N-acetyl-beta-D-glucosaminyl derivative + GDP-beta-L-fucose = an alpha-L-Fuc-(1-&gt;2)-beta-D-Gal-(1-&gt;4)-beta-D-GlcNAc derivative + GDP + H(+). It carries out the reaction a ganglioside GA1 + GDP-beta-L-fucose = a ganglioside Fuc-GA1 + GDP + H(+). It catalyses the reaction a beta-D-Gal-(1-&gt;3)-beta-D-GlcNAc-(1-&gt;3)-beta-D-Gal-(1-&gt;4)-beta-D-Glc-(1&lt;-&gt;1')-Cer(d18:1(4E)) + GDP-beta-L-fucose = alpha-L-fucosyl-(1-&gt;2)- beta-D-galactosyl-(1-&gt;3)-N-acetyl-beta-D-glucosaminyl-(1-&gt;3)-beta-D-galactosyl-(1-&gt;4)-beta-D-glucosyl-(1&lt;-&gt;1')-N-acylsphing-4-enine + GDP + H(+). The catalysed reaction is a neolactoside nLc4Cer(d18:1(4E)) + GDP-beta-L-fucose = a neolactoside IV(2)-alpha-Fuc-nLc4Cer(d18:1(4E)) + GDP + H(+). The enzyme catalyses a ganglioside GM1 + GDP-beta-L-fucose = a ganglioside Fuc-GM1 + GDP + H(+). It carries out the reaction beta-D-galactosyl-(1-&gt;3)-N-acetyl-D-galactosamine + GDP-beta-L-fucose = alpha-L-fucosyl-(1-&gt;2)-beta-D-galactosyl-(1-&gt;3)-N-acetyl-D-galactosamine + GDP + H(+). It functions in the pathway protein modification; protein glycosylation. Functionally, catalyzes the transfer of L-fucose, from a guanosine diphosphate-beta-L-fucose, to the terminal galactose residue of glycoconjugates through an alpha(1,2) linkage leading to H antigen synthesis that is an intermediate substrate in the synthesis of ABO blood group antigens. H antigen is essential for maturation of the glomerular layer of the main olfactory bulb, in cell migration and early cell-cell contacts during tumor associated angiogenesis. Preferentially fucosylates soluble lactose and to a lesser extent fucosylates glycolipids gangliosides GA1 and GM1a. The polypeptide is Galactoside alpha-(1,2)-fucosyltransferase 1 (Leontopithecus chrysomelas (Golden-headed lion tamarin)).